Reading from the N-terminus, the 377-residue chain is Nitric oxide reductase FlRd-NAD(+) reductase (377 aa).

Belongs to the FAD-dependent oxidoreductase family. FAD is required as a cofactor.

Its subcellular location is the cytoplasm. The catalysed reaction is 2 reduced [nitric oxide reductase rubredoxin domain] + NAD(+) + H(+) = 2 oxidized [nitric oxide reductase rubredoxin domain] + NADH. Its pathway is nitrogen metabolism; nitric oxide reduction. One of at least two accessory proteins for anaerobic nitric oxide (NO) reductase. Reduces the rubredoxin moiety of NO reductase. This Salmonella agona (strain SL483) protein is Nitric oxide reductase FlRd-NAD(+) reductase.